Reading from the N-terminus, the 509-residue chain is GRAS family protein RAD1 (509 aa).

Residues 125–508 enclose the GRAS domain; that stretch reads EDGCADGMRL…KPIVAASCWK (384 aa). A leucine repeat I (LRI) region spans residues 132 to 198; sequence MRLVQLLIAC…IQPIGSGAGV (67 aa). The VHIID stretch occupies residues 217–286; it reads YRLVYETCPH…SGHGRVRRLR (70 aa). The VHIID signature appears at 248 to 252; the sequence is VHVVD. The segment at 299-331 is leucine repeat II (LRII); that stretch reads AIGDELSDYANNLGINLEFSVVQKNLENLQPED. A PFYRE region spans residues 340-431; that stretch reads LVVNSILQLH…QFYFAEEIKN (92 aa). Residues 434–508 are SAW; it reads SCEGPLRMER…KPIVAASCWK (75 aa).

It belongs to the GRAS family. As to quaternary structure, interacts with RAM1 and NSP2. Expressed in roots under low phosphate (Pi) conditions.

The protein localises to the nucleus. Functionally, transcription factor acting as a regulator of arbuscular mycorrhiza (AM)-related genes (e.g. PT4, STR and RAM2). Required for the morphogenesis of arbuscules upon symbiosis with AM fungi (e.g. Rhizophagus irregularis). Also involved in restricting mycorrhizal colonization of the root meristem. The polypeptide is GRAS family protein RAD1 (Lotus japonicus (Lotus corniculatus var. japonicus)).